We begin with the raw amino-acid sequence, 357 residues long: Ferrochelatase (357 aa).

2 residues coordinate Fe cation: H193 and E272.

This sequence belongs to the ferrochelatase family.

It localises to the cytoplasm. The enzyme catalyses heme b + 2 H(+) = protoporphyrin IX + Fe(2+). It participates in porphyrin-containing compound metabolism; protoheme biosynthesis; protoheme from protoporphyrin-IX: step 1/1. Its function is as follows. Catalyzes the ferrous insertion into protoporphyrin IX. The polypeptide is Ferrochelatase (Hyphomonas neptunium (strain ATCC 15444)).